Here is a 294-residue protein sequence, read N- to C-terminus: 4-hydroxy-tetrahydrodipicolinate synthase (294 aa).

Thr-44 contacts pyruvate. Tyr-132 acts as the Proton donor/acceptor in catalysis. Lys-160 functions as the Schiff-base intermediate with substrate in the catalytic mechanism. Val-202 lines the pyruvate pocket.

It belongs to the DapA family. In terms of assembly, homotetramer; dimer of dimers.

The protein localises to the cytoplasm. The enzyme catalyses L-aspartate 4-semialdehyde + pyruvate = (2S,4S)-4-hydroxy-2,3,4,5-tetrahydrodipicolinate + H2O + H(+). Its pathway is amino-acid biosynthesis; L-lysine biosynthesis via DAP pathway; (S)-tetrahydrodipicolinate from L-aspartate: step 3/4. Functionally, catalyzes the condensation of (S)-aspartate-beta-semialdehyde [(S)-ASA] and pyruvate to 4-hydroxy-tetrahydrodipicolinate (HTPA). The sequence is that of 4-hydroxy-tetrahydrodipicolinate synthase from Leptospira borgpetersenii serovar Hardjo-bovis (strain JB197).